We begin with the raw amino-acid sequence, 95 residues long: Large ribosomal subunit protein bL25 (95 aa).

Belongs to the bacterial ribosomal protein bL25 family. In terms of assembly, part of the 50S ribosomal subunit; part of the 5S rRNA/L5/L18/L25 subcomplex. Contacts the 5S rRNA. Binds to the 5S rRNA independently of L5 and L18.

This is one of the proteins that binds to the 5S RNA in the ribosome where it forms part of the central protuberance. This chain is Large ribosomal subunit protein bL25, found in Shewanella baltica (strain OS223).